The sequence spans 341 residues: MIEFRQVSKSFHKKKQTIDALKDVSFTVNRNDIFGVIGYSGAGKSTLVRLVNHLEAASNGQVIVDGHDITNYSEKGMREIKKDIGMIFQHFNLLNSATVFKNVAMPLILSKKSKTEIKQRVTEMLEFVGLSDKKDQFPDELSGGQKQRVAIARALVTNPKILLCDEATSALDPATTASILTLLKNVNQTFGITIMMITHEMRVIKDICNRVAVMEKGQVVETGTVKEVFSHPKTTIAQNFVSTVIQTEPSTSLIRRLNDEQVGGFKDYKIFVEETQVTQPIINDLIQICGREVKILFSSMSEIQGNTVCYMWLRFNIDQQFDDTAINQYFKEKNIQFEEVH.

The ABC transporter domain occupies 2 to 241; that stretch reads IEFRQVSKSF…PKTTIAQNFV (240 aa). 38 to 45 contributes to the ATP binding site; the sequence is GYSGAGKS.

This sequence belongs to the ABC transporter superfamily. Methionine importer (TC 3.A.1.24) family. In terms of assembly, the complex is composed of two ATP-binding proteins (MetN), two transmembrane proteins (MetI) and a solute-binding protein (MetQ).

It is found in the cell membrane. The catalysed reaction is L-methionine(out) + ATP + H2O = L-methionine(in) + ADP + phosphate + H(+). It catalyses the reaction D-methionine(out) + ATP + H2O = D-methionine(in) + ADP + phosphate + H(+). Its function is as follows. Part of the ABC transporter complex MetNIQ involved in methionine import. Responsible for energy coupling to the transport system. The protein is Methionine import ATP-binding protein MetN 1 of Staphylococcus aureus (strain Mu50 / ATCC 700699).